The primary structure comprises 474 residues: PRAME family member 2 (474 aa).

The stretch at 97 to 124 (RWKLQVLDLRDVDENFWARWPGAWALSC) is one LRR 1; degenerate repeat. One copy of the LRR 2; degenerate repeat lies at 179–203 (HLCCSKLVNYLTPIKYLRKSLKIIY). The LRR 3; degenerate repeat unit spans residues 204–230 (INSIGELEIHNTCWPHLIRKLYCYLKE). The LRR 4; degenerate repeat unit spans residues 231–265 (MKTLCKLVFSRCHHYTSDNELEGWLVTRFTSVFLR). LRR repeat units follow at residues 266-291 (LEHL…IRCL), 292-323 (QNPL…GYLK), 324-342 (HLNL…PLGA), 348-375 (AASL…GLSC), and 376-400 (CSQL…LLRH).

It belongs to the PRAME family.

This is PRAME family member 2 from Homo sapiens (Human).